The chain runs to 105 residues: Large ribosomal subunit protein bL21 (105 aa).

Belongs to the bacterial ribosomal protein bL21 family. As to quaternary structure, part of the 50S ribosomal subunit. Contacts protein L20.

In terms of biological role, this protein binds to 23S rRNA in the presence of protein L20. The protein is Large ribosomal subunit protein bL21 of Parabacteroides distasonis (strain ATCC 8503 / DSM 20701 / CIP 104284 / JCM 5825 / NCTC 11152).